A 428-amino-acid chain; its full sequence is Glutamyl-tRNA reductase (428 aa).

Substrate-binding positions include 55–58 (TCNR), S114, 119–121 (ETQ), and Q125. The Nucleophile role is filled by C56. NADP(+) is bound at residue 194–199 (GAGEMI).

It belongs to the glutamyl-tRNA reductase family. Homodimer.

The catalysed reaction is (S)-4-amino-5-oxopentanoate + tRNA(Glu) + NADP(+) = L-glutamyl-tRNA(Glu) + NADPH + H(+). Its pathway is porphyrin-containing compound metabolism; protoporphyrin-IX biosynthesis; 5-aminolevulinate from L-glutamyl-tRNA(Glu): step 1/2. In terms of biological role, catalyzes the NADPH-dependent reduction of glutamyl-tRNA(Glu) to glutamate 1-semialdehyde (GSA). The chain is Glutamyl-tRNA reductase from Paraburkholderia xenovorans (strain LB400).